Here is a 145-residue protein sequence, read N- to C-terminus: Cell wall synthesis protein CwsA (145 aa).

The helical transmembrane segment at 104 to 124 (WIFAGIAAAILAGGAVAFSIV) threads the bilayer.

It belongs to the CwsA family.

It localises to the cell membrane. Functionally, required for regulated cell division, cell wall synthesis and the maintenance of cell shape. The sequence is that of Cell wall synthesis protein CwsA from Mycobacterium bovis (strain ATCC BAA-935 / AF2122/97).